A 281-amino-acid polypeptide reads, in one-letter code: Release factor glutamine methyltransferase (281 aa).

S-adenosyl-L-methionine-binding residues include glutamate 142 and asparagine 184. 184-187 provides a ligand contact to substrate; that stretch reads NPPY. Residues 261-281 form a disordered region; sequence AADHPDLNNRPRFATARKALP.

This sequence belongs to the protein N5-glutamine methyltransferase family. PrmC subfamily.

It carries out the reaction L-glutaminyl-[peptide chain release factor] + S-adenosyl-L-methionine = N(5)-methyl-L-glutaminyl-[peptide chain release factor] + S-adenosyl-L-homocysteine + H(+). Methylates the class 1 translation termination release factors RF1/PrfA and RF2/PrfB on the glutamine residue of the universally conserved GGQ motif. The polypeptide is Release factor glutamine methyltransferase (Streptomyces coelicolor (strain ATCC BAA-471 / A3(2) / M145)).